Reading from the N-terminus, the 543-residue chain is Zinc finger protein egl-43 (543 aa).

Positions 2–62 (SIDTDFLTSV…NLIKEADDGE (61 aa)) are positive regulatory (PR) domain. C2H2-type zinc fingers lie at residues 159–181 (HKCG…SHIH) and 187–209 (FRCH…RRVH). Residues 213–233 (WTCPTCQSQMPSQAALTKHRP) form a C2H2-type 3; atypical zinc finger. Positions 299 to 380 (PDAECSSGHA…TSTKKRPTSH (82 aa)) are disordered. A compositionally biased stretch (polar residues) spans 306 to 317 (GHASESSPTTTE). The span at 335 to 348 (TTSKSDDGEDRDSI) shows a compositional bias: basic and acidic residues. 2 consecutive C2H2-type zinc fingers follow at residues 444 to 466 (YTCK…LRTH) and 472 to 495 (YKCQ…RNIH). The segment at 496 to 543 (NKPNTSLTPHNHHRQRSLHNSTSTSTTTTTVHHPLLHLPGTSVPVPKV) is disordered. The segment covering 513-533 (LHNSTSTSTTTTTVHHPLLHL) has biased composition (low complexity).

The protein resides in the nucleus. Its function is as follows. Probable transcription factor, required for migration of the hermaphrodite-specific motor neurons (HSNs) from the tail to the gonad primordium during HSN cell differentiation. Required for phasmid neuron development. Required to specify the pi-cell fate of ventral uterine precursor cell (VU) cells. Probable transcription factor, involved in lin-12 (Notch)-dependent anchor cell (AC) and ventral uterine (VU) precursor cell fate specification and in AC invasion. Prevents AC proliferation after AC cell specification by repressing lin-12 expression. May form a positive feedback loop, together with the transcription factor fos-1, that maintains mutual high levels of expression and so activates AC invasion. Functionally, dispensable for anchor cell (AC) invasion and for preventing AC proliferation. In Caenorhabditis elegans, this protein is Zinc finger protein egl-43.